Consider the following 444-residue polypeptide: ATP-dependent protease ATPase subunit HslU (444 aa).

Residues I20, 62–67 (GVGKTE), D257, E322, and R394 each bind ATP.

This sequence belongs to the ClpX chaperone family. HslU subfamily. A double ring-shaped homohexamer of HslV is capped on each side by a ring-shaped HslU homohexamer. The assembly of the HslU/HslV complex is dependent on binding of ATP.

The protein resides in the cytoplasm. Its function is as follows. ATPase subunit of a proteasome-like degradation complex; this subunit has chaperone activity. The binding of ATP and its subsequent hydrolysis by HslU are essential for unfolding of protein substrates subsequently hydrolyzed by HslV. HslU recognizes the N-terminal part of its protein substrates and unfolds these before they are guided to HslV for hydrolysis. The chain is ATP-dependent protease ATPase subunit HslU from Bordetella avium (strain 197N).